Consider the following 445-residue polypeptide: Glycine--tRNA ligase (445 aa).

The substrate site is built by Arg-97 and Glu-145. Residues 177-179, 187-192, 262-263, and 308-311 each bind ATP; these read RNE, FRTCEF, EV, and GLTR. Position 192–196 (192–196) interacts with substrate; it reads FEQME. 304 to 308 provides a ligand contact to substrate; sequence ETSAG.

Belongs to the class-II aminoacyl-tRNA synthetase family. In terms of assembly, homodimer.

It localises to the cytoplasm. It carries out the reaction tRNA(Gly) + glycine + ATP = glycyl-tRNA(Gly) + AMP + diphosphate. In terms of biological role, catalyzes the attachment of glycine to tRNA(Gly). This Borreliella burgdorferi (strain ZS7) (Borrelia burgdorferi) protein is Glycine--tRNA ligase.